Reading from the N-terminus, the 371-residue chain is Queuine tRNA-ribosyltransferase (371 aa).

The active-site Proton acceptor is Asp90. Substrate contacts are provided by residues 90 to 94 (DSGGF), Asp144, Gln189, and Gly215. The segment at 246-252 (GVGTPEN) is RNA binding. Asp265 functions as the Nucleophile in the catalytic mechanism. The RNA binding; important for wobble base 34 recognition stretch occupies residues 270–274 (TRNAR). Positions 303, 305, 308, and 334 each coordinate Zn(2+).

The protein belongs to the queuine tRNA-ribosyltransferase family. In terms of assembly, homodimer. Within each dimer, one monomer is responsible for RNA recognition and catalysis, while the other monomer binds to the replacement base PreQ1. It depends on Zn(2+) as a cofactor.

The catalysed reaction is 7-aminomethyl-7-carbaguanine + guanosine(34) in tRNA = 7-aminomethyl-7-carbaguanosine(34) in tRNA + guanine. It functions in the pathway tRNA modification; tRNA-queuosine biosynthesis. Its function is as follows. Catalyzes the base-exchange of a guanine (G) residue with the queuine precursor 7-aminomethyl-7-deazaguanine (PreQ1) at position 34 (anticodon wobble position) in tRNAs with GU(N) anticodons (tRNA-Asp, -Asn, -His and -Tyr). Catalysis occurs through a double-displacement mechanism. The nucleophile active site attacks the C1' of nucleotide 34 to detach the guanine base from the RNA, forming a covalent enzyme-RNA intermediate. The proton acceptor active site deprotonates the incoming PreQ1, allowing a nucleophilic attack on the C1' of the ribose to form the product. After dissociation, two additional enzymatic reactions on the tRNA convert PreQ1 to queuine (Q), resulting in the hypermodified nucleoside queuosine (7-(((4,5-cis-dihydroxy-2-cyclopenten-1-yl)amino)methyl)-7-deazaguanosine). This is Queuine tRNA-ribosyltransferase from Helicobacter pylori (strain P12).